A 188-amino-acid chain; its full sequence is Protease-associated domain-containing protein 1 (188 aa).

The first 21 residues, 1–21 (MVPGAAGWCCLVLWLPACVAA), serve as a signal peptide directing secretion. A PA domain is found at 83-163 (IQDQIALVER…RSLEQHGLPW (81 aa)). Residue Asn-171 is glycosylated (N-linked (GlcNAc...) asparagine).

Post-translationally, N-glycosylated; required for efficient secretion. Highly expressed in skeletal muscle, heart and liver. Expressed at intermediate level in kidney.

The protein resides in the secreted. Functionally, plays a role in the modulation of physical activity and adiposity. This Homo sapiens (Human) protein is Protease-associated domain-containing protein 1.